We begin with the raw amino-acid sequence, 119 residues long: Large ribosomal subunit protein uL18 (119 aa).

This sequence belongs to the universal ribosomal protein uL18 family. As to quaternary structure, part of the 50S ribosomal subunit; part of the 5S rRNA/L5/L18/L25 subcomplex. Contacts the 5S and 23S rRNAs.

Functionally, this is one of the proteins that bind and probably mediate the attachment of the 5S RNA into the large ribosomal subunit, where it forms part of the central protuberance. The protein is Large ribosomal subunit protein uL18 of Cupriavidus taiwanensis (strain DSM 17343 / BCRC 17206 / CCUG 44338 / CIP 107171 / LMG 19424 / R1) (Ralstonia taiwanensis (strain LMG 19424)).